The sequence spans 419 residues: Acyl-coenzyme A thioesterase 6 (419 aa).

Residues S232, D324, and H358 each act as charge relay system in the active site. Residues 417–419 carry the Peroxisome targeting signal motif; the sequence is SKL.

Belongs to the C/M/P thioester hydrolase family. As to expression, highly expressed in white adipose tissue. Detected at lower levels in kidney, liver, brown adipose tissue and brain.

The protein localises to the peroxisome. The enzyme catalyses pristanoyl-CoA + H2O = 2,6,10,14-tetramethylpentadecanoate + CoA + H(+). It carries out the reaction phytanoyl-CoA + H2O = 3,7,11,15-tetramethylhexadecanoate + CoA + H(+). The protein operates within lipid metabolism; fatty acid metabolism. Its function is as follows. Catalyzes the hydrolysis of acyl-CoAs into free fatty acids and coenzyme A (CoASH), regulating their respective intracellular levels. Catalyzes the hydrolysis of phytanoyl-CoA and pristanoyl-CoA, two methyl-branched fatty acids derived from phytol, that enter the body via the diet. This is Acyl-coenzyme A thioesterase 6 from Mus musculus (Mouse).